We begin with the raw amino-acid sequence, 198 residues long: Syndecan-4 (198 aa).

An N-terminal signal peptide occupies residues 1 to 23 (MAPACLLAPLLLLLLGGFPLVPG). The Extracellular segment spans residues 24 to 145 (ESIRETEVID…QGSNIFERTE (122 aa)). Disordered regions lie at residues 42 to 76 (YFSG…PRPF) and 94 to 130 (AQPG…NKVS). O-linked (Xyl...) (glycosaminoglycan) serine glycosylation is found at S44, S62, and S64. Acidic residues predominate over residues 48 to 71 (PDDEDAGGSDDFELSGSGDLDDTE). Residues 102 to 118 (SEPKELEENEVIPKRAP) show a composition bias toward basic and acidic residues. The chain crosses the membrane as a helical span at residues 146-170 (VLAALIVGGVVGILFAVFLILLLVY). The Cytoplasmic portion of the chain corresponds to 171 to 198 (RMKKKDEGSYDLGKKPIYKKAPTNEFYA).

This sequence belongs to the syndecan proteoglycan family. Homodimer. Interacts with CDCP1 and SDCBP. Interacts (via its cytoplasmic domain) with GIPC (via its PDZ domain). Interacts (via its cytoplasmic domain) with NUDT16L1. Interacts with DNM2; this interaction is markedly enhanced at focal ahesion site upon induction of focal adhesions and stress-fiber formation. Shedding is enhanced by a number of factors such as heparanase, thrombin or EGF. Also by stress and wound healing. PMA-mediated shedding is inhibited by TIMP3. Post-translationally, O-glycosylated; contains both chondroitin sulfate and heparan sulfate. Ser-44, Ser-62 and Ser-64 can all be modified by either chondroitin sulfate or heparan sulfate, and the protein exists in forms that contain only chondroitin sulfate, only heparan sulfate and both chondroitin sulfate and heparan sulfate. As to expression, ubiquitous. Highest levels in liver, kidney and lung.

The protein localises to the membrane. Its subcellular location is the secreted. Cell surface proteoglycan which regulates exosome biogenesis in concert with SDCBP and PDCD6IP. In Mus musculus (Mouse), this protein is Syndecan-4.